The primary structure comprises 339 residues: D-erythrose-4-phosphate dehydrogenase (339 aa).

11 to 12 (RI) serves as a coordination point for NAD(+). Residues 158–160 (SCT), Arg-204, 217–218 (TK), and Arg-240 contribute to the substrate site. Catalysis depends on Cys-159, which acts as the Nucleophile. Asn-322 is an NAD(+) binding site.

It belongs to the glyceraldehyde-3-phosphate dehydrogenase family. Epd subfamily. As to quaternary structure, homotetramer.

The protein resides in the cytoplasm. It carries out the reaction D-erythrose 4-phosphate + NAD(+) + H2O = 4-phospho-D-erythronate + NADH + 2 H(+). The protein operates within cofactor biosynthesis; pyridoxine 5'-phosphate biosynthesis; pyridoxine 5'-phosphate from D-erythrose 4-phosphate: step 1/5. Functionally, catalyzes the NAD-dependent conversion of D-erythrose 4-phosphate to 4-phosphoerythronate. The sequence is that of D-erythrose-4-phosphate dehydrogenase from Aliivibrio fischeri (strain ATCC 700601 / ES114) (Vibrio fischeri).